A 194-amino-acid chain; its full sequence is UPF0232 protein in recF-gyrB intergenic region (194 aa).

Over residues Met1–Ala14 the composition is skewed to acidic residues. Positions Met1–Gln81 are disordered. Over residues Asp30–Arg52 the composition is skewed to basic and acidic residues.

It belongs to the UPF0232 family.

The sequence is that of UPF0232 protein in recF-gyrB intergenic region from Mycolicibacterium smegmatis (Mycobacterium smegmatis).